The following is a 364-amino-acid chain: Apyrase (364 aa).

The signal sequence occupies residues 1–35 (MRSSYRVGNPIRFQPTNVVGLLLLSLVLSFMLVQS).

The protein belongs to the apyrase family. Ca(2+) serves as cofactor. In terms of tissue distribution, salivary gland (at protein level).

The protein localises to the secreted. It carries out the reaction a ribonucleoside 5'-triphosphate + 2 H2O = a ribonucleoside 5'-phosphate + 2 phosphate + 2 H(+). Its function is as follows. Facilitates hematophagy by inhibiting ADP-dependent platelet aggregation in the host. Cleaves adenosine triphosphate (ATP) and adenosine diphosphate (ADP) to adenosine monophosphate (AMP) and inorganic phosphate in calcium-dependent manner. This chain is Apyrase, found in Cimex lectularius (Bed bug).